The primary structure comprises 127 residues: Probable tautomerase YusQ (127 aa).

Residue proline 2 is the Proton acceptor; via imino nitrogen of the active site.

This sequence belongs to the 4-oxalocrotonate tautomerase family.

This Bacillus subtilis (strain 168) protein is Probable tautomerase YusQ (yusQ).